The primary structure comprises 250 residues: Vacuolar protein sorting-associated protein 22 homolog 1 (250 aa).

A coiled-coil region spans residues 35 to 55 (MKEQLSTFRSQLEEFARKHKN).

It belongs to the SNF8 family. As to quaternary structure, component of the endosomal sorting complex required for transport II (ESCRT-II), composed of VPS22, VPS25 and VPS36.

The protein resides in the endosome. In terms of biological role, component of the endosomal sorting complex required for transport II (ESCRT-II), which is required for multivesicular body (MVB) formation and sorting of endosomal cargo proteins into MVBs. The ESCRT-II complex is probably involved in the recruitment of the ESCRT-III complex. In Arabidopsis thaliana (Mouse-ear cress), this protein is Vacuolar protein sorting-associated protein 22 homolog 1 (VP22-1).